A 502-amino-acid polypeptide reads, in one-letter code: Lysine--tRNA ligase (502 aa).

Mg(2+)-binding residues include E411 and E418.

Belongs to the class-II aminoacyl-tRNA synthetase family. As to quaternary structure, homodimer. Requires Mg(2+) as cofactor.

Its subcellular location is the cytoplasm. The enzyme catalyses tRNA(Lys) + L-lysine + ATP = L-lysyl-tRNA(Lys) + AMP + diphosphate. The chain is Lysine--tRNA ligase from Clostridium kluyveri (strain ATCC 8527 / DSM 555 / NBRC 12016 / NCIMB 10680 / K1).